The primary structure comprises 137 residues: NADH-ubiquinone oxidoreductase chain 3 (137 aa).

The next 3 membrane-spanning stretches (helical) occupy residues 6-26 (LFIL…LIFA), 57-77 (FFIF…TFPF), and 86-106 (IYGL…FVYE).

It belongs to the complex I subunit 3 family.

The protein resides in the mitochondrion membrane. The catalysed reaction is a ubiquinone + NADH + 5 H(+)(in) = a ubiquinol + NAD(+) + 4 H(+)(out). Its function is as follows. Core subunit of the mitochondrial membrane respiratory chain NADH dehydrogenase (Complex I) that is believed to belong to the minimal assembly required for catalysis. Complex I functions in the transfer of electrons from NADH to the respiratory chain. The immediate electron acceptor for the enzyme is believed to be ubiquinone. This is NADH-ubiquinone oxidoreductase chain 3 (ND3) from Podospora anserina (strain S / ATCC MYA-4624 / DSM 980 / FGSC 10383) (Pleurage anserina).